The chain runs to 371 residues: MSL complex subunit 3B (371 aa).

Disordered stretches follow at residues 1-47 (MATL…DERA) and 160-230 (EERA…PQAK). The segment covering 8–47 (PKDDGEGKDEGGSDRGDGDSKPKGKKEVEPHTRREADERA) has biased composition (basic and acidic residues). Residues 44–367 (DERAMRIPIP…CEAHYSSKNP (324 aa)) enclose the MRG domain. Over residues 183 to 193 (SESQAVAGPAA) the composition is skewed to low complexity. Residues 206–216 (APRRSTRHSTH) show a composition bias toward basic residues.

Its subcellular location is the nucleus. Probable non-catalytic component of the MSL histone acetyltransferase complex, a multiprotein complex that mediates the majority of histone H4 acetylation at 'Lys-16' (H4K16ac), an epigenetic mark that prevents chromatin compaction. The sequence is that of MSL complex subunit 3B from Mus musculus (Mouse).